Consider the following 376-residue polypeptide: tRNA-specific 2-thiouridylase MnmA (376 aa).

ATP is bound by residues 17 to 24 (GMSGGVDS) and Met43. The tract at residues 103–105 (NPD) is interaction with target base in tRNA. Cys108 acts as the Nucleophile in catalysis. A disulfide bridge connects residues Cys108 and Cys204. Gly132 serves as a coordination point for ATP. Positions 154–156 (KDQ) are interaction with tRNA. The active-site Cysteine persulfide intermediate is the Cys204. Positions 316 to 317 (RY) are interaction with tRNA.

This sequence belongs to the MnmA/TRMU family.

It is found in the cytoplasm. The catalysed reaction is S-sulfanyl-L-cysteinyl-[protein] + uridine(34) in tRNA + AH2 + ATP = 2-thiouridine(34) in tRNA + L-cysteinyl-[protein] + A + AMP + diphosphate + H(+). Functionally, catalyzes the 2-thiolation of uridine at the wobble position (U34) of tRNA, leading to the formation of s(2)U34. In Pseudomonas savastanoi pv. phaseolicola (strain 1448A / Race 6) (Pseudomonas syringae pv. phaseolicola (strain 1448A / Race 6)), this protein is tRNA-specific 2-thiouridylase MnmA.